The following is a 195-amino-acid chain: Orotate phosphoribosyltransferase (195 aa).

5-phospho-alpha-D-ribose 1-diphosphate contacts are provided by residues arginine 87, lysine 91, and 112–120 (DDVATTGGS). The orotate site is built by threonine 116 and arginine 144.

It belongs to the purine/pyrimidine phosphoribosyltransferase family. PyrE subfamily. Homodimer. It depends on Mg(2+) as a cofactor.

It catalyses the reaction orotidine 5'-phosphate + diphosphate = orotate + 5-phospho-alpha-D-ribose 1-diphosphate. It functions in the pathway pyrimidine metabolism; UMP biosynthesis via de novo pathway; UMP from orotate: step 1/2. In terms of biological role, catalyzes the transfer of a ribosyl phosphate group from 5-phosphoribose 1-diphosphate to orotate, leading to the formation of orotidine monophosphate (OMP). This chain is Orotate phosphoribosyltransferase, found in Sulfurisphaera tokodaii (strain DSM 16993 / JCM 10545 / NBRC 100140 / 7) (Sulfolobus tokodaii).